A 341-amino-acid polypeptide reads, in one-letter code: Mitochondrial transcription factor 1 (341 aa).

4 residues coordinate S-adenosyl-L-methionine: L23, E77, D101, and N137.

The protein belongs to the class I-like SAM-binding methyltransferase superfamily. rRNA adenine N(6)-methyltransferase family.

Its subcellular location is the mitochondrion intermembrane space. Its function is as follows. Mitochondrial transcription factor that confers selective promoter recognition on the core subunit of the yeast mitochondrial RNA polymerase. Interacts with DNA in a non-specific manner. This chain is Mitochondrial transcription factor 1 (MTF1), found in Saccharomyces cerevisiae (strain ATCC 204508 / S288c) (Baker's yeast).